A 199-amino-acid polypeptide reads, in one-letter code: dTTP/UTP pyrophosphatase (199 aa).

Residue Asp75 is the Proton acceptor of the active site.

It belongs to the Maf family. YhdE subfamily. A divalent metal cation serves as cofactor.

The protein resides in the cytoplasm. It carries out the reaction dTTP + H2O = dTMP + diphosphate + H(+). The enzyme catalyses UTP + H2O = UMP + diphosphate + H(+). Functionally, nucleoside triphosphate pyrophosphatase that hydrolyzes dTTP and UTP. May have a dual role in cell division arrest and in preventing the incorporation of modified nucleotides into cellular nucleic acids. The sequence is that of dTTP/UTP pyrophosphatase from Methylobacillus flagellatus (strain ATCC 51484 / DSM 6875 / VKM B-1610 / KT).